A 583-amino-acid polypeptide reads, in one-letter code: Dynein axonemal assembly factor 3 (583 aa).

The disordered stretch occupies residues 455–534 (RGGGDSAVES…RADQIPPLEA (80 aa)).

Belongs to the DNAAF3 family.

It localises to the cytoplasm. Its subcellular location is the dynein axonemal particle. Required for the assembly of axonemal inner and outer dynein arms. Involved in preassembly of dyneins into complexes before their transport into cilia. The sequence is that of Dynein axonemal assembly factor 3 (Dnaaf3) from Rattus norvegicus (Rat).